We begin with the raw amino-acid sequence, 292 residues long: Bifunctional protein FolD (292 aa).

NADP(+)-binding positions include 166 to 168 (GRS), S191, and I232.

The protein belongs to the tetrahydrofolate dehydrogenase/cyclohydrolase family. As to quaternary structure, homodimer.

The enzyme catalyses (6R)-5,10-methylene-5,6,7,8-tetrahydrofolate + NADP(+) = (6R)-5,10-methenyltetrahydrofolate + NADPH. It carries out the reaction (6R)-5,10-methenyltetrahydrofolate + H2O = (6R)-10-formyltetrahydrofolate + H(+). The protein operates within one-carbon metabolism; tetrahydrofolate interconversion. In terms of biological role, catalyzes the oxidation of 5,10-methylenetetrahydrofolate to 5,10-methenyltetrahydrofolate and then the hydrolysis of 5,10-methenyltetrahydrofolate to 10-formyltetrahydrofolate. The polypeptide is Bifunctional protein FolD (Wolbachia pipientis wMel).